A 139-amino-acid polypeptide reads, in one-letter code: Protein spalt-accessory (139 aa).

An N-terminal signal peptide occupies residues 1 to 16; that stretch reads MKLLIALLALVTAAIA. The span at 60–75 shows a compositional bias: gly residues; the sequence is GIGQGGVHPGQGGFAG. A disordered region spans residues 60–139; the sequence is GIGQGGVHPG…HHEHHGHHRH (80 aa). Over residues 109 to 121 the composition is skewed to basic and acidic residues; the sequence is NPHEYPEHHGEHH. Residues 122–139 are compositionally biased toward basic residues; sequence REHHEHHGHHEHHGHHRH.

It is found in the secreted. Functionally, likely to be involved in the establishment of the head. The protein is Protein spalt-accessory (sala) of Drosophila simulans (Fruit fly).